The sequence spans 247 residues: tRNA pseudouridine synthase A (247 aa).

The active-site Nucleophile is the Asp-58. Tyr-116 is a substrate binding site.

It belongs to the tRNA pseudouridine synthase TruA family. Homodimer.

The catalysed reaction is uridine(38/39/40) in tRNA = pseudouridine(38/39/40) in tRNA. Formation of pseudouridine at positions 38, 39 and 40 in the anticodon stem and loop of transfer RNAs. This is tRNA pseudouridine synthase A from Hydrogenobaculum sp. (strain Y04AAS1).